Here is a 494-residue protein sequence, read N- to C-terminus: Inosine-5'-monophosphate dehydrogenase (494 aa).

2 CBS domains span residues 93–154 and 158–217; these read IIRN…DEKI and MTTN…CKDS. NAD(+)-binding positions include aspartate 251 and 301-303; that span reads GIG. K(+)-binding residues include glycine 303 and glycine 305. An IMP-binding site is contributed by serine 306. Position 308 (cysteine 308) interacts with K(+). Cysteine 308 acts as the Thioimidate intermediate in catalysis. Residues 341 to 343, 364 to 365, and 388 to 392 contribute to the IMP site; these read DGG, GS, and YRGMG. Arginine 406 acts as the Proton acceptor in catalysis. Glutamate 421 contributes to the IMP binding site. The K(+) site is built by glutamate 475, serine 476, and histidine 477.

The protein belongs to the IMPDH/GMPR family. In terms of assembly, homotetramer. K(+) serves as cofactor.

It catalyses the reaction IMP + NAD(+) + H2O = XMP + NADH + H(+). It participates in purine metabolism; XMP biosynthesis via de novo pathway; XMP from IMP: step 1/1. Its activity is regulated as follows. Mycophenolic acid (MPA) is a non-competitive inhibitor that prevents formation of the closed enzyme conformation by binding to the same site as the amobile flap. In contrast, mizoribine monophosphate (MZP) is a competitive inhibitor that induces the closed conformation. MPA is a potent inhibitor of mammalian IMPDHs but a poor inhibitor of the bacterial enzymes. MZP is a more potent inhibitor of bacterial IMPDH. In terms of biological role, catalyzes the conversion of inosine 5'-phosphate (IMP) to xanthosine 5'-phosphate (XMP), the first committed and rate-limiting step in the de novo synthesis of guanine nucleotides, and therefore plays an important role in the regulation of cell growth. This chain is Inosine-5'-monophosphate dehydrogenase, found in Chlorobaculum tepidum (strain ATCC 49652 / DSM 12025 / NBRC 103806 / TLS) (Chlorobium tepidum).